A 3856-amino-acid polypeptide reads, in one-letter code: MKLQNPDKKTLREGFSQESSVVALDSGVLAMSGLKCDGKFPVKDVLMEEGGDKVRKIQVSGGNISLVVDFSGARTSSNNFFESNASCVNENLVKGNGYREDETQEFLVGNLVWVMTKYKKWWPGEVVDFKADAKESFMVRSIGQSHLVSWFASSKLKPFKESFEQVLNQRNDNGFFDALQKAMSLLSNSLKLDMTCSCIADGNGIVSAQNITTRKNKPLILREFSVDRLEPKEFVTQLKNIAKCVLNAGVLESTVMQSQLSAFYTLFGHKQIPMAQLHENEGRKSFTAKMSDSKFIGSPSICAGNSRKRFRKEWFRKFVSEVDNVSARDDLVNVPPSDLISKLKLLAVGYNCSEETENIGLFEWFFSKFRISVYHDENAYKMQLANMAGFKDLMLATNANRGTVQKTLKSKKIGKSKMEPLNGVSVADTEQKTFELQISKKSNIESLNGVSVADTEQKTFELQILEKSNIESLNGVSTPNIDHEASKSNNSGKTKINHIIGHSNFPSSVAKVQLAKDFQDKLLVQAPDRKAMTADTLSRPAAILVPDLNSGGNALGTAEFDHMQRPETLIQHNVCPQEEKTPRSTILNFQVTAHQGVSGTQFVSSQPTSYKHFTSADLFTYSGKKKRGRKRKNAEELPIVAHASATTGIPDLNGTNTEPTLVLPQVEPTQRRRRRKKEESPNGLTRGITILFLKFSSQVSMPSRDDLTSTFSAFGPLDSSETHVSEEFSGAQVAFVSSADAIEAVKSLEKANPFGETLVNFRLQQKLITVQRNIAPRMPVISHVSPVPKPNNIPTSMDAMRQNLLMMTAMLEKSGDSLSRETKAKLKSEITGLLEKDGVKLLNTWLEGERSITFCRFLSQNTAKLKLDEIPNAETWPFLVKLLLQCVSMEVSGSKRRMPKPTFAKTLRVVVQRTEETKFPGVQFPLLSMAKTLFTHVHDILSNTPSFQSEYGTILRHLLEIKEYRFQMRKRTYSSLVLLYMERAETGFCEKNSGQHSQKEEAFRYILTLQSLLENSPGDFPDDLREEIVNGLIHIFSSVRDEGKLSRKLIECVNTFLLKDGPNLGSLSLEIHNAVEQFVFRCWLTTHDKNLKEILVSYGRLQLNLTRDSSESSSLVEQLLDVVTRELDLGSSSSSASWGDTTKDEKLGALSSYQNSLVELAAHVFYRACVNTSRPSLSEKRARRQHIAMRMVDALTEGKWLWCAAFGCLVRNYCARINMDLLIYWFEAICTNFQRLLEDASMRRSYDGLLWTLRSLQGLSSGLSLPDITMDISKSSASSSELDRGWQSIWSSLIHGLATFSSMSVIVDAVLVLLGSIISSNHITVKILPQEVWDHQLFRHIPSEPALYFIACYFSRMGCQGNLQDDLHLRRNLLRAVCAPLSWKVRLTLDERMVQLLPAAAFSLCAGFKVSLPLPKEHLPTPSQWDVCEQIDDVDRERNFGLFECSVEALTRICSNSSKISGCQVPDVVQLPLVLRDPLLHDMDIYFLSIIPEVKEKGPLSDIFMGCALLCHFMHGSYITRKGKGSSSFFLKACQYLLEGLDHAVESVSKSLNDLQRRGSLGFGSDFNEKGSIIVSLRSFTQSPVFSNRRDQNLLGASYDFVIHSLENLLRSFAKVYEEYTEHAWNTHSDTVPSKSLAPDSPEVGRIVDMDLDLAEDTKERDIIAAGGKAVPGLPVSMGNWKLGMVSLISCFSPVLQFPTWDVLYNLLEKESDPKVLENILYHLCKLSCLTSIPKVDDLVIFLDGMLSTQVKMKRNCLNIVTALHVLLHTLSSSRRDSSGVEKNCGLSLKEAESFQVFVQLGAMVNKVSEFGLLGWFGRVKLINCICDLVLLNPQTGQTMIERLLLMLSDSDYRVRFVLARQIGILFQTWDGHEALFQDICSSFGIKLVTSSKEKLVTAKDVLAVGPQPRQKMETVIITLMHLAYHSENIELQAVFMMCAVSAKDPCQRELIIAALDNLSAQLHYPSRFKYLEELLGPILFHWIASGVSLAGLIETSQLFIPNAEPKYFIHFCSHWLLPALLLHEDHTNLDWVAKMAGQPVVVLVKENFVPIFSICMGLHCSKTSECDKGAMVLQNSILYVGETSENERDKLIKQNMVSIVSFILSCASSSPEPPVPTFSRDTISLAVQTVVDGFLENTDYPKNAAITDRINIFRPDRVFMFITEMHYRMSAACHHRHTRHHLAALEELTILLGHRALVPSSLNYIFNLVGQFIGYPSLQDQCCSIASCLLDLFKSNPAKEIVSVLGDQLQFLVSKLVTCCIDAEADTKISGAKSSQLVNLLHKLVVSSDSSLNEDIRDLEPLPDLKYFQVIRESHIRICEAYSPRNHLLKVEHSTFLIYIFLEILSLSNFLFLSCSTIQQCSRRSNYLPPRFLSRSLQALHNKLIASEVSQEDTNGETAETFWQSDDEIVNAVWTLVRVSASDEADSMRLLVSDFLSRIGIRDPHTVVFHLPGNLVSMHGLQGFGHNTGSKVRSLTENGISDETLITLLNFLKKYLLDDSVKIIDVTSQTLRGILSTERGQQALSSFDSCERALIEVHGRGVNLDIVEKILLDSQKQFKAEKFSLETPEVWSTDNKNFDRWICQLVYCMIALCEDVPIRLCQNIALLKAEISELLFPSVVVSLAGRIGMDINLHDLITSQVKEHIFTDSNKLTKSKQVMLNTLNELRMCYVLERSIFSGQTKREKNSRSCSTAAKIRDVESGSNGMAASITTNWEKVYWLSIDYLVVAGSAVVCGAYLTASMYVEYWCEEKFGNLSLGDPDFSYHDKLPDHVEILVSAITRINEPDSLYGVIHSNKLSAQIITFEHEGNWTRALEYYDLQARSQKMVVPSSLSENLEVEQFQPTTSARHSVFGEGEVQRQPFKGLIRSLQQTGCMHVLDLYCRGLTSREGCFQYDPEFIELQYEAAWRAGKWDFSLLYPQTHCQPLQHAKNNNYHESLHCCLRALQEGDYDGFYGKLKDTKKELVLSISRASEESTEFIYSTVVKLQILHHLGLVWDLRWTTSSHQSVHGYLVKQMACVDPVIPTMDQLSWLNKDWNSIITQTQLHMTLLEPFIAFRRVLLQILGCEKCTMQHLLQSASLLRKGTRFSHAAASLHEFKFLCARSNGQQPVPDWLGKLEEAKLLHAQGRHEVSISLANYILHNYQLKEEASDIYRVIGKWLAETRSSNSRTILEKYLRPAVSLAEEQSSKICKRLVDRQSQTWFHLAHYADALFKSYEERLSSSEWQAALRLRKHKTKELEVFIKRFKSSKKAEQSDYSLKIQDLQKQLTMDKEEAEKLQVDRDNFLKLALEGYKRCLEIGDKYDVRVVFRQVSMWFSLASQKNVIDNMLSTIKEVQSYKFIPLVYQIASRLGSSKDESGSNSFQSALVSLIRKMAIDHPYHTILQLLALANGDRIKDNQRSRNSFVVDMDKKLAAEHLLQDVSHYHGPMIRQMKQLVDIYIKLAELETRREDTNRKVALPREIRSVKQLELVPVVTATIPVDRSCQYNEGSFPFFRGLSDSVTVMNGINAPKVVECFGSDGQKYKQLAKSGNDDLRQDAVMEQFFGLVNTFLHNNRDTWKRRLAVRTYKVIPFTPSAGVLEWVDGTIPLGDYLIGSSRSEGAHGRYGIGNWKYPKCREHMSSAKDKRKAFVDVCTNFRPVMHYFFLEKFLQPADWFVKRLAYTRSVAASSMVGYIVGLGDRHAMNILIDQATAEVVHIDLGVAFEQGLMLKTPERVPFRLTRDIIDGMGITGVEGVFRRCCEETLSVMRTNKEALLTIVEVFIHDPLYKWALSPLKALQRQKETEDYDGMNLEGLQEEFEGNKDATRALMRVKQKLDGYEGGEMRSIHGQAQQLIQDAIDTDRLSHMFPGWGAWM.

One can recognise a PWWP domain in the interval 108 to 162 (VGNLVWVMTKYKKWWPGEVVDFKADAKESFMVRSIGQSHLVSWFASSKLKPFKES). Residues 648–681 (GIPDLNGTNTEPTLVLPQVEPTQRRRRRKKEESP) are disordered. In terms of domain architecture, FAT spans 2727–3393 (VVAGSAVVCG…ILQLLALANG (667 aa)). Positions 3233-3249 (RKHKTKELEVFIKRFKS) match the Bipartite nuclear localization signal motif. The PI3K/PI4K catalytic domain maps to 3499-3811 (LSDSVTVMNG…GNKDATRALM (313 aa)). The segment at 3505–3511 (VMNGINA) is G-loop. The interval 3678 to 3686 (GLGDRHAMN) is catalytic loop. An activation loop region spans residues 3698 to 3722 (HIDLGVAFEQGLMLKTPERVPFRLT). An FATC domain is found at 3824–3856 (EMRSIHGQAQQLIQDAIDTDRLSHMFPGWGAWM).

Belongs to the PI3/PI4-kinase family. As to quaternary structure, interacts with RUG3. As to expression, ubiquitously expressed at low levels with slightly higher levels in flower buds.

It is found in the nucleus. It catalyses the reaction L-seryl-[protein] + ATP = O-phospho-L-seryl-[protein] + ADP + H(+). The catalysed reaction is L-threonyl-[protein] + ATP = O-phospho-L-threonyl-[protein] + ADP + H(+). Serine/threonine protein kinase which activates checkpoint signaling upon genotoxic stresses such as ionizing radiation (IR) or DNA replication stalling. Plays a central role in the perception and response to both stress-induced damage in somatic cells and developmentally programmed DNA damage during meiosis. Recognizes the substrate consensus sequence [ST]-Q. Phosphorylates histone variant H2AX to form H2AXS139ph at double strand breaks (DSBs), thereby regulating DNA damage response mechanism. Involved in transcriptional regulation of RAD51, PARP1, GR1, and LIG4 in response to DNA double strand breaks. Plays a dual role by activating the DNA damage response at dysfunctional telomeres and yet preventing this activation at functional telomeres. Not required for telomere length homeostasis. Regulates DNA damage response (DDR) synergistically with RUG3. Together with RUG3, involved in the splicing of the ND2/NAD2 mRNA. This is Serine/threonine-protein kinase ATM from Arabidopsis thaliana (Mouse-ear cress).